Consider the following 211-residue polypeptide: Large ribosomal subunit protein uL3 (211 aa).

The protein belongs to the universal ribosomal protein uL3 family. In terms of assembly, part of the 50S ribosomal subunit. Forms a cluster with proteins L14 and L19.

In terms of biological role, one of the primary rRNA binding proteins, it binds directly near the 3'-end of the 23S rRNA, where it nucleates assembly of the 50S subunit. The polypeptide is Large ribosomal subunit protein uL3 (Halothermothrix orenii (strain H 168 / OCM 544 / DSM 9562)).